A 222-amino-acid chain; its full sequence is DnaJ homolog subfamily B member 9 (222 aa).

A signal peptide spans Met-1–Ala-23. In terms of domain architecture, J spans Ser-26–Gly-90. The interval His-91–Gln-222 is divergent targeting domain. The residue at position 133 (Ser-133) is a Phosphoserine.

As to quaternary structure, interacts with HSPA5/BiP; interaction is direct. Interacts with ERN1/IRE1 (via the luminal region). Interacts with DERL1.

The protein resides in the endoplasmic reticulum lumen. Co-chaperone for Hsp70 protein HSPA5/BiP that acts as a key repressor of the ERN1/IRE1-mediated unfolded protein response (UPR). J domain-containing co-chaperones stimulate the ATPase activity of Hsp70 proteins and are required for efficient substrate recognition by Hsp70 proteins. In the unstressed endoplasmic reticulum, interacts with the luminal region of ERN1/IRE1 and selectively recruits HSPA5/BiP: HSPA5/BiP disrupts the dimerization of the active ERN1/IRE1 luminal region, thereby inactivating ERN1/IRE1. Also involved in endoplasmic reticulum-associated degradation (ERAD) of misfolded proteins. Required for survival of B-cell progenitors and normal antibody production. The polypeptide is DnaJ homolog subfamily B member 9 (Cricetulus griseus (Chinese hamster)).